We begin with the raw amino-acid sequence, 226 residues long: Protein TRI1 (226 aa).

Positions 1–56 constitute a DEK-C domain; that stretch reads MADINKYIPMVDAILSVSNPDEISPKRVRKALQILYSVNLDSQRKLINELILERFG. The interval 83–118 is disordered; it reads QKEEERPLRSTRKRKGKSESKSKRKKKKNDSPDSNS. Residues 91 to 110 are compositionally biased toward basic residues; that stretch reads RSTRKRKGKSESKSKRKKKK. Serine 113 bears the Phosphoserine mark. The SWIB/MDM2 domain occupies 119 to 195; it reads ISVRKVLLSA…NKLLTKHLFN (77 aa). The span at 200 to 218 shows a compositional bias: basic and acidic residues; that stretch reads VKHEEEQKQTPEKEIKLEN. Residues 200–226 are disordered; the sequence is VKHEEEQKQTPEKEIKLENESLPNLSG. Residues lysine 201 and lysine 215 each participate in a glycyl lysine isopeptide (Lys-Gly) (interchain with G-Cter in SUMO) cross-link. Serine 225 bears the Phosphoserine mark.

Its subcellular location is the cytoplasm. It localises to the nucleus. It is found in the nucleolus. Its function is as follows. May be involved in transcription regulation. The sequence is that of Protein TRI1 (TRI1) from Saccharomyces cerevisiae (strain ATCC 204508 / S288c) (Baker's yeast).